Here is a 257-residue protein sequence, read N- to C-terminus: MLTLLSPAKKLLSISKHYSKETSNPLLLDKALQLVKIMKLKSVEQIADLMDLSRQLAELNYERYQNFDLKNNPMNHSYPALFLFQGDVYQGLNANSWKDEEIEYAQSHLGILSGLYGFLRPLDRIQPYRLEMGVNLENPAGKNLYAFWSKIVTNILNQILAEQSNPVLINLASTEYFKVVDEKKLSYPIVTINFYEQKNSELKMIGILAKKARGMMAKYIMQNRIDSIEQIKEFSESGYLFNKEISSPNSLNFIRIH.

The protein belongs to the UPF0246 family.

This Legionella pneumophila (strain Corby) protein is UPF0246 protein LPC_0782.